The chain runs to 456 residues: GTPase Der (456 aa).

2 EngA-type G domains span residues 3–167 (FTIA…PPSD) and 185–360 (IRVA…AVWN). Residues 9 to 16 (GRPNVGKS), 56 to 60 (DTAGL), and 119 to 122 (NKSE) each bind GTP. The tract at residues 162–181 (IVPPSDDEDDEREETDEERA) is disordered. Over residues 166–178 (SDDEDDEREETDE) the composition is skewed to acidic residues. GTP-binding positions include 191-198 (GRPNAGKS), 238-242 (DTAGL), and 303-306 (NKWD). The KH-like domain occupies 361-445 (RRVPTAALNR…PVRITLREKA (85 aa)).

It belongs to the TRAFAC class TrmE-Era-EngA-EngB-Septin-like GTPase superfamily. EngA (Der) GTPase family. As to quaternary structure, associates with the 50S ribosomal subunit.

In terms of biological role, GTPase that plays an essential role in the late steps of ribosome biogenesis. The polypeptide is GTPase Der (Bradyrhizobium sp. (strain ORS 278)).